Consider the following 229-residue polypeptide: Ribonuclease 3 (229 aa).

Residues 5–134 form the RNase III domain; sequence EQKLEQDFGI…FLGALYLDQG (130 aa). Glutamate 47 is a Mg(2+) binding site. Residue aspartate 51 is part of the active site. Mg(2+) is bound by residues aspartate 120 and glutamate 123. Glutamate 123 is a catalytic residue. The DRBM domain maps to 160 to 229; that stretch reads DYKTALQERL…AKSALEQLGN (70 aa).

Belongs to the ribonuclease III family. Homodimer. Mg(2+) is required as a cofactor.

The protein resides in the cytoplasm. It catalyses the reaction Endonucleolytic cleavage to 5'-phosphomonoester.. Functionally, digests double-stranded RNA. Involved in the processing of primary rRNA transcript to yield the immediate precursors to the large and small rRNAs (23S and 16S). Also processes some mRNAs, and tRNAs when they are encoded in the rRNA operon. Its function is as follows. CRISPR (clustered regularly interspaced short palindromic repeat) is an adaptive immune system that provides protection against mobile genetic elements (viruses, transposable elements and conjugative plasmids). CRISPR clusters contain spacers, sequences complementary to antecedent mobile elements, and target invading nucleic acids. CRISPR clusters are transcribed and processed into CRISPR RNA (crRNA). In this organism endogenous ribonuclease 3 and Cas9 are required for correct coprocessing of pre-crRNA and the trans-encoded small RNA (tracrRNA). Cas9, crRNA and tracrRNA are required for cleavage of invading DNA. Complements pre-crRNA and tracRNA coprocessing defects in an rnc deletion in S.pyogenes strain 370. The protein is Ribonuclease 3 of Streptococcus thermophilus (strain ATCC BAA-491 / LMD-9).